Here is a 111-residue protein sequence, read N- to C-terminus: Aquaporin-2 (111 aa).

Residues Ser1–Arg6 are Cytoplasmic-facing. The chain crosses the membrane as a helical span at residues Ala7–Leu27. At Asn28–Thr37 the chain is on the extracellular side. The chain crosses the membrane as a helical span at residues Val38–Leu56. The Cytoplasmic portion of the chain corresponds to Gly57–Gly61. Positions Ala62–Ala71 form an intramembrane region, discontinuously helical. The NPA 1 motif lies at Asn65–Ala67. The Cytoplasmic portion of the chain corresponds to Cys72–Arg82. A helical membrane pass occupies residues Ala83–Leu104. Topologically, residues Thr105–Gly111 are extracellular.

It belongs to the MIP/aquaporin (TC 1.A.8) family. As to quaternary structure, homotetramer. Serine phosphorylation is necessary and sufficient for expression at the apical membrane. Endocytosis is not phosphorylation-dependent. Post-translationally, N-glycosylated.

The protein resides in the apical cell membrane. The protein localises to the basolateral cell membrane. It is found in the cell membrane. It localises to the cytoplasmic vesicle membrane. Its subcellular location is the golgi apparatus. The protein resides in the trans-Golgi network membrane. It catalyses the reaction H2O(in) = H2O(out). The catalysed reaction is glycerol(in) = glycerol(out). Functionally, forms a water-specific channel that provides the plasma membranes of renal collecting duct with high permeability to water, thereby permitting water to move in the direction of an osmotic gradient. Plays an essential role in renal water homeostasis. Could also be permeable to glycerol. The sequence is that of Aquaporin-2 from Macroscelides proboscideus (Short-eared elephant shrew).